The following is a 344-amino-acid chain: Trace amine-associated receptor 8b (344 aa).

The Extracellular portion of the chain corresponds to 1 to 31; the sequence is MTSNFSQPALQLCYENTNGSCIKTPYSPGPR. N-linked (GlcNAc...) asparagine glycosylation is found at Asn-4 and Asn-18. Cystine bridges form between Cys-21–Cys-185 and Cys-104–Cys-189. Residues 32–52 traverse the membrane as a helical segment; sequence VILYMVFGFGAVLAVCGNLLV. Residues 53-67 lie on the Cytoplasmic side of the membrane; it reads VISVLHFKQLHSPAN. The chain crosses the membrane as a helical span at residues 68–88; the sequence is FLIASLASADFLVGISVMPFS. Residues 89 to 111 lie on the Extracellular side of the membrane; it reads MVRSIESCWYFGDAFCSLHSCCD. Residues 112–132 form a helical membrane-spanning segment; that stretch reads VAFCYSSALHLCFISVDRYIA. Residues 133–146 are Cytoplasmic-facing; the sequence is VTDPLVYPTKFTVS. The helical transmembrane segment at 147–167 threads the bilayer; that stretch reads VSGICISISWILPLVYSSAVF. Residues 168–195 lie on the Extracellular side of the membrane; sequence YTGISAKGIESLVSALNCVGGCQIVVNQ. A helical membrane pass occupies residues 196–216; the sequence is DWVLIDFLLFFIPTLVMIILY. The Cytoplasmic segment spans residues 217–260; that stretch reads SKIFLVAKQQAVKIETSVSDNRGESSSESHKARVAKRERKAAKT. The chain crosses the membrane as a helical span at residues 261-281; sequence LGVTVVAFMVSWLPYTIDSLV. Asp-282 is a topological domain (extracellular). The helical transmembrane segment at 283 to 303 threads the bilayer; that stretch reads AFVGFITPAYVYEICCWSAYY. At 304–344 the chain is on the cytoplasmic side; that stretch reads NSAMNPLIYAFFYPWFRKAIKLILSGEILKSHSSTMSLFSE.

This sequence belongs to the G-protein coupled receptor 1 family. In terms of tissue distribution, specifically expressed in neurons of the olfactory epithelium.

Its subcellular location is the cell membrane. Its function is as follows. Olfactory receptor specific for trace amines. Trace amine compounds are enriched in animal body fluids and act on trace amine-associated receptors (TAARs) to elicit both intraspecific and interspecific innate behaviors. Ligand-binding causes a conformation change that triggers signaling via G alpha proteins, possibly G(i)/G(o) G alpha proteins. This is Trace amine-associated receptor 8b from Mus musculus (Mouse).